Reading from the N-terminus, the 526-residue chain is Probable feruloyl esterase B-2 (526 aa).

The signal sequence occupies residues 1 to 18 (MTKLSLLPLLTLASAVLA). Intrachain disulfides connect cysteine 27–cysteine 74 and cysteine 62–cysteine 113. Asparagine 52 carries N-linked (GlcNAc...) asparagine glycosylation. The N-linked (GlcNAc...) asparagine glycan is linked to asparagine 137. Cystine bridges form between cysteine 186/cysteine 441, cysteine 255/cysteine 272, cysteine 281/cysteine 291, and cysteine 503/cysteine 525. Serine 187 functions as the Acyl-ester intermediate in the catalytic mechanism. Asparagine 233 is a glycosylation site (N-linked (GlcNAc...) asparagine). Aspartate 256, aspartate 259, alanine 261, aspartate 263, and isoleucine 265 together coordinate Ca(2+). The N-linked (GlcNAc...) asparagine glycan is linked to asparagine 311. Active-site charge relay system residues include aspartate 400 and histidine 440. The N-linked (GlcNAc...) asparagine glycan is linked to asparagine 516.

It belongs to the tannase family.

The protein resides in the secreted. It carries out the reaction feruloyl-polysaccharide + H2O = ferulate + polysaccharide.. In terms of biological role, involved in degradation of plant cell walls. Hydrolyzes the feruloyl-arabinose ester bond in arabinoxylans as well as the feruloyl-galactose and feruloyl-arabinose ester bonds in pectin. The chain is Probable feruloyl esterase B-2 (faeB-2) from Aspergillus fumigatus (strain CBS 144.89 / FGSC A1163 / CEA10) (Neosartorya fumigata).